The following is a 542-amino-acid chain: MTTDLQAELETEVERRRNFAIISHPDAGKTTLTEKLLLYGGAIHEAGAVKARRAQRHATSDWMEMEQQRGISITSTVLQFEYQGYQINLLDTPGHQDFSEDTYRTLAAADNAVMLVDAAKGLEPQTRKLFEVCKLRSLPIFTFINKLDRPGREPLDLLDEIEKELGLQTYAVNWPIGMGDRFKGVYDRRLQQIHLFERTAHGKREARDTIVDLGDPQIEALLDQDLYFQLKDDLELIEGLGPELDLEAVHQGKMTPIFFGSAMTNFGVELFLNAFLDYALKPATYRSSQGAIAPTHEDFSGFVFKLQANMDPKHRDRVAFVRVCAGKFEKDMTVNHARTGKMIRLSRPQKLFAQGRESLETAYAGDVIGLNNPGVFAIGDTIYSGQKLEYEGIPCFSPELFAYLRNPNPSKFKQFQKGVSELREEGAVQIMYSVDESKREPILAAVGQLQFEVVQFRLQNEYGVETRIELLPYTVARWVVEGWPALEAVGRIFNAVTVKDSWGRPVLLFKNEWNAQQVLADHPKLKLSGIAPVVSGQQPEAL.

Residues 14–283 (ERRRNFAIIS…AFLDYALKPA (270 aa)) form the tr-type G domain. Residues 23 to 30 (SHPDAGKT), 91 to 95 (DTPGH), and 145 to 148 (NKLD) each bind GTP.

The protein belongs to the TRAFAC class translation factor GTPase superfamily. Classic translation factor GTPase family. PrfC subfamily.

It localises to the cytoplasm. Increases the formation of ribosomal termination complexes and stimulates activities of RF-1 and RF-2. It binds guanine nucleotides and has strong preference for UGA stop codons. It may interact directly with the ribosome. The stimulation of RF-1 and RF-2 is significantly reduced by GTP and GDP, but not by GMP. The protein is Peptide chain release factor 3 of Cyanothece sp. (strain PCC 7425 / ATCC 29141).